A 608-amino-acid chain; its full sequence is Translation initiation factor RLI1 (608 aa).

4Fe-4S ferredoxin-type domains lie at 7 to 39 (RIAI…KLCI) and 46 to 75 (KIAF…IINL). ABC transporter domains lie at 70-320 (IQII…FLDG) and 345-568 (LQND…LKNL). 110–117 (GTNGIGKS) is a binding site for ATP. The residue at position 349 (Ser349) is a Phosphoserine. 385 to 392 (GENGTGKT) serves as a coordination point for ATP.

The protein belongs to the ABC transporter superfamily. ABCE family. As to quaternary structure, component of the multifactor complex (MFC) composed of at least RLI1, the eIF2 subunit SUI2, TIF5/eIF5, and the eIF3 subunits PRT1, HCR1, NIP1, RPG1, TIF34 and TIF35. The complex associates with pre-initiation complexes. Interacts with the complex YAE1:LTO1; the complex bridges the interaction between the CIA complex and RLI1.

It is found in the cytoplasm. The protein resides in the nucleus. Component of the multifactor complex (MFC) involved in translation initiation. Required for the binding of MFC to the 40S ribosome. Required for the processing and nuclear export of the 60S and 40S ribosomal subunits. The sequence is that of Translation initiation factor RLI1 (RLI1) from Saccharomyces cerevisiae (strain ATCC 204508 / S288c) (Baker's yeast).